Reading from the N-terminus, the 155-residue chain is Transcriptional repressor NrdR (155 aa).

A zinc finger lies at cysteine 3–cysteine 34. Residues leucine 49–aspartate 139 enclose the ATP-cone domain.

Belongs to the NrdR family. It depends on Zn(2+) as a cofactor.

Its function is as follows. Negatively regulates transcription of bacterial ribonucleotide reductase nrd genes and operons by binding to NrdR-boxes. The sequence is that of Transcriptional repressor NrdR from Dinoroseobacter shibae (strain DSM 16493 / NCIMB 14021 / DFL 12).